A 326-amino-acid polypeptide reads, in one-letter code: Peroxidase 41 (326 aa).

A signal peptide spans 1-20; it reads MSSVINVLFVVLVFVPSIYS. A glycan (N-linked (GlcNAc...) asparagine) is linked at Asn25. 4 disulfides stabilise this stretch: Cys35-Cys116, Cys68-Cys73, Cys122-Cys318, and Cys201-Cys228. The active-site Proton acceptor is the His66. Asp67, Gly72, Asp74, and Ser76 together coordinate Ca(2+). Pro164 serves as a coordination point for substrate. Residue Asn167 is glycosylated (N-linked (GlcNAc...) asparagine). Heme b is bound at residue His194. Thr195 serves as a coordination point for Ca(2+). An N-linked (GlcNAc...) asparagine glycan is attached at Asn234. The Ca(2+) site is built by Asp242, Thr245, and Asp250. Asn286 carries an N-linked (GlcNAc...) asparagine glycan.

The protein belongs to the peroxidase family. Classical plant (class III) peroxidase subfamily. Heme b is required as a cofactor. The cofactor is Ca(2+).

Its subcellular location is the secreted. It catalyses the reaction 2 a phenolic donor + H2O2 = 2 a phenolic radical donor + 2 H2O. Its function is as follows. Removal of H(2)O(2), oxidation of toxic reductants, biosynthesis and degradation of lignin, suberization, auxin catabolism, response to environmental stresses such as wounding, pathogen attack and oxidative stress. These functions might be dependent on each isozyme/isoform in each plant tissue. In Arabidopsis thaliana (Mouse-ear cress), this protein is Peroxidase 41 (PER41).